The primary structure comprises 215 residues: Guanylate kinase (215 aa).

Positions 6-185 constitute a Guanylate kinase-like domain; the sequence is GAILVLSGPS…SEKLLLSIAR (180 aa). ATP is bound at residue 13–20; that stretch reads GPSGSGKS.

Belongs to the guanylate kinase family.

The protein resides in the cytoplasm. The catalysed reaction is GMP + ATP = GDP + ADP. In terms of biological role, essential for recycling GMP and indirectly, cGMP. This chain is Guanylate kinase, found in Wolinella succinogenes (strain ATCC 29543 / DSM 1740 / CCUG 13145 / JCM 31913 / LMG 7466 / NCTC 11488 / FDC 602W) (Vibrio succinogenes).